A 351-amino-acid chain; its full sequence is tRNA N6-adenosine threonylcarbamoyltransferase (351 aa).

Fe cation contacts are provided by His-111 and His-115. Substrate contacts are provided by residues 134-138 (LVSGG), Asp-167, Gly-180, and Asn-276. Asp-304 is a binding site for Fe cation.

Belongs to the KAE1 / TsaD family. The cofactor is Fe(2+).

The protein resides in the cytoplasm. It catalyses the reaction L-threonylcarbamoyladenylate + adenosine(37) in tRNA = N(6)-L-threonylcarbamoyladenosine(37) in tRNA + AMP + H(+). Required for the formation of a threonylcarbamoyl group on adenosine at position 37 (t(6)A37) in tRNAs that read codons beginning with adenine. Is involved in the transfer of the threonylcarbamoyl moiety of threonylcarbamoyl-AMP (TC-AMP) to the N6 group of A37, together with TsaE and TsaB. TsaD likely plays a direct catalytic role in this reaction. This Marinobacter nauticus (strain ATCC 700491 / DSM 11845 / VT8) (Marinobacter aquaeolei) protein is tRNA N6-adenosine threonylcarbamoyltransferase.